The following is a 654-amino-acid chain: Tetratricopeptide repeat protein 30 homolog (654 aa).

TPR repeat units lie at residues glutamate 10–arginine 43, alanine 44–glutamate 76, alanine 143–asparagine 176, leucine 178–asparagine 210, leucine 384–valine 417, alanine 449–aspartate 483, and cysteine 533–glycine 566.

This sequence belongs to the TTC30/dfy-1/fleer family.

It localises to the cell projection. The protein resides in the cilium. Required for polyglutamylation of axonemal tubulin in sensory cilia. Plays a role in anterograde intraflagellar transport (IFT), the process by which cilia precursors are transported from the base of the cilium to the site of their incorporation at the tip. In Drosophila pseudoobscura pseudoobscura (Fruit fly), this protein is Tetratricopeptide repeat protein 30 homolog.